Reading from the N-terminus, the 626-residue chain is DNA mismatch repair protein MutL (626 aa).

Residues 352–399 form a disordered region; it reads QPPSPSFTSRPSSAGYASGSWHPAVSSPRTEWSPQTAHPAHRPLDLGA. The span at 378 to 387 shows a compositional bias: polar residues; it reads SPRTEWSPQT.

This sequence belongs to the DNA mismatch repair MutL/HexB family.

Its function is as follows. This protein is involved in the repair of mismatches in DNA. It is required for dam-dependent methyl-directed DNA mismatch repair. May act as a 'molecular matchmaker', a protein that promotes the formation of a stable complex between two or more DNA-binding proteins in an ATP-dependent manner without itself being part of a final effector complex. The protein is DNA mismatch repair protein MutL of Brucella anthropi (strain ATCC 49188 / DSM 6882 / CCUG 24695 / JCM 21032 / LMG 3331 / NBRC 15819 / NCTC 12168 / Alc 37) (Ochrobactrum anthropi).